The chain runs to 477 residues: Xylose isomerase (477 aa).

His142 is an active-site residue. Mn(2+) contacts are provided by Glu273, Glu309, His312, Asp337, Asp348, Asp350, and Asp380.

The protein belongs to the xylose isomerase family. The cofactor is Mn(2+).

The catalysed reaction is alpha-D-xylose = alpha-D-xylulofuranose. This Arabidopsis thaliana (Mouse-ear cress) protein is Xylose isomerase (XYLA).